Reading from the N-terminus, the 91-residue chain is Elongation factor 1-beta (91 aa).

It belongs to the EF-1-beta/EF-1-delta family.

In terms of biological role, promotes the exchange of GDP for GTP in EF-1-alpha/GDP, thus allowing the regeneration of EF-1-alpha/GTP that could then be used to form the ternary complex EF-1-alpha/GTP/AAtRNA. The chain is Elongation factor 1-beta from Saccharolobus islandicus (strain Y.N.15.51 / Yellowstone #2) (Sulfolobus islandicus).